Reading from the N-terminus, the 632-residue chain is 1-deoxy-D-xylulose-5-phosphate synthase (632 aa).

Thiamine diphosphate is bound by residues His-79 and 120-122 (GHA). Asp-151 is a binding site for Mg(2+). Thiamine diphosphate-binding positions include 152–153 (GS), Asn-180, Phe-292, and Glu-376. Asn-180 contributes to the Mg(2+) binding site.

This sequence belongs to the transketolase family. DXPS subfamily. Homodimer. The cofactor is Mg(2+). Thiamine diphosphate serves as cofactor.

The enzyme catalyses D-glyceraldehyde 3-phosphate + pyruvate + H(+) = 1-deoxy-D-xylulose 5-phosphate + CO2. It functions in the pathway metabolic intermediate biosynthesis; 1-deoxy-D-xylulose 5-phosphate biosynthesis; 1-deoxy-D-xylulose 5-phosphate from D-glyceraldehyde 3-phosphate and pyruvate: step 1/1. In terms of biological role, catalyzes the acyloin condensation reaction between C atoms 2 and 3 of pyruvate and glyceraldehyde 3-phosphate to yield 1-deoxy-D-xylulose-5-phosphate (DXP). This is 1-deoxy-D-xylulose-5-phosphate synthase from Azobacteroides pseudotrichonymphae genomovar. CFP2.